Reading from the N-terminus, the 362-residue chain is MSVILAIFIAAAGCLFSSWRIYWSPWACFPGPKLAALSSWYEWYWEVYRKGQLNAHLQDLHASYGPVVRYGPKHVHFNDPALYRDVYKWHPSFGKDPAFYGAPKYSSTFRETNISKHAARRQVLSRRFSPAVVRQRMPVIERHCEHLWQKLDRLTQAGRKNFNFFNLCRSFAADLLSTYMSGTTFGCMDDDEQGFDGNFIRAIQHTSDTYFDNRNIFLARWTSLLKMFGYGPPPLDKMLDELTFSDGLVEDYLSAKDSKGKEDTVFAILTQPGAVKDFSPLSKPELMAEGRSLLAAGVNTVGFTLSSTLFYIARDEDVQLRLQTELDTSTPQQTLASLPYMVGNLSIFILSDRLTLYTRPPV.

A helical membrane pass occupies residues 3-23 (VILAIFIAAAGCLFSSWRIYW).

This sequence belongs to the cytochrome P450 family.

The protein resides in the membrane. The protein operates within secondary metabolite biosynthesis. Functionally, cytochrome P450 monooxygenase-like protein; part of the cluster that mediates the biosynthesis of a highly modified cyclo-arginine-tryptophan dipeptide (cRW). The first step of the pathway is perfornmed by the arginine-containing cyclodipeptide synthase (RCPDS) avaA that acts as the scaffold-generating enzyme and is responsible for formation of the cyclo-Arg-Trp (cRW) diketopiperazine. AvaB then acts as a multifunctional flavoenzyme that is responsible for generating the cyclo-Arg-formylkynurenine DKP, which can be deformylated by avaC. AvaB then further catalyzes an additional N-oxidation followed by cyclization and dehydration. The next step is an N-acetylation of the guanidine group catalyzed by the arginine N-acetyltransferase avaD. The roles of the additional enzymes identified within the ava cluster still have to be determined. The chain is Cytochrome P450 monooxygenase-like protein avaN from Aspergillus versicolor.